The following is a 361-amino-acid chain: Probable cadicidin biosynthesis thioesterase (361 aa).

Residues 2–29 (RVTVDSEQCVGAGQCVLNAPEVFDQDDD) enclose the 4Fe-4S ferredoxin-type domain. Residues 36–110 (RADPTSGTTR…RRDSPVTTAD (75 aa)) form a disordered region. Residues 46-61 (RSARRATCARRPRSSS) show a composition bias toward basic residues. Composition is skewed to basic and acidic residues over residues 62 to 74 (RRTE…DRHR) and 94 to 104 (TDRRQNHRRDS). The active site involves Ser201.

Belongs to the thioesterase family.

It participates in antibiotic biosynthesis; candicidin biosynthesis. In terms of biological role, probable thioesterase involved in the biosynthesis of candicidin. Could release the macrolide ring from the polyketide synthase. This is Probable cadicidin biosynthesis thioesterase from Streptomyces griseus.